The primary structure comprises 402 residues: Hyaluronan and proteoglycan link protein 4 (402 aa).

The signal sequence occupies residues 1-29 (MVCARAALGPGALWAAAWGVLLLTAPAGA). Positions 46-161 (SVVVQTAPGQ…DAGMVKLDLE (116 aa)) constitute an Ig-like C2-type domain. Cystine bridges form between Cys-68–Cys-143, Cys-185–Cys-266, Cys-209–Cys-230, Cys-293–Cys-363, and Cys-318–Cys-339. A glycan (N-linked (GlcNAc...) asparagine) is linked at Asn-132. Link domains lie at 163-268 (VVFP…FCFT) and 273-365 (GRVF…YCYR).

The protein belongs to the HAPLN family. In terms of tissue distribution, expressed predominantly in brain.

The protein resides in the secreted. Its subcellular location is the extracellular space. It localises to the extracellular matrix. Essential for the proper localization of brevican (BCAN), mainly as a perineuronal nets (PNNs)-type deposition in the brainstem and cerebellum thereby playing a key role in the formation and structural organization of PNNs. Contributes to the formation and transmission of inhibitory GABAergic synapses between Purkinje cells and deep cerebellar nuclei neurons. The chain is Hyaluronan and proteoglycan link protein 4 (HAPLN4) from Homo sapiens (Human).